A 2664-amino-acid chain; its full sequence is Non-reducing polyketide synthase sorB (2664 aa).

Residues 21–45 (KSAPQSGNTADDIPNAASQPDTTST) form a disordered region. Residues 36 to 45 (AASQPDTTST) are compositionally biased toward polar residues. An N-terminal acylcarrier protein transacylase domain (SAT) region spans residues 112–281 (ADHARRLAEW…TTPSRIASDL (170 aa)). Cys-184 acts as the Nucleophile; for transacylase activity in catalysis. The Proton donor/acceptor; for transacylase activity role is filled by His-302. The Ketosynthase family 3 (KS3) domain maps to 428–849 (DNDIAVIGMS…GSNASMVIKQ (422 aa)). Residues Cys-596, His-731, and His-772 each act as for beta-ketoacyl synthase activity in the active site. Positions 961–1276 (CFGGQVSKSV…TQGTRQLADV (316 aa)) are malonyl-CoA:ACP transacylase (MAT) domain. An N-terminal hotdog fold region spans residues 1345 to 1477 (PGLYTFMGYG…GQLEFHRADD (133 aa)). The PKS/mFAS DH domain maps to 1345 to 1663 (PGLYTFMGYG…FSARSMSELF (319 aa)). A product template (PT) domain region spans residues 1376–1548 (VSGYTLGKTV…PSESAGRAVK (173 aa)). Residues 1507 to 1663 (DEVIQGQSIY…FSARSMSELF (157 aa)) form a C-terminal hotdog fold region. The region spanning 1711 to 1785 (TELWAKLLPV…GILAFLQSTL (75 aa)) is the Carrier domain. Position 1745 is an O-(pantetheine 4'-phosphoryl)serine (Ser-1745). Residues 1789 to 1820 (GEDDASQSSDAASSSRNTPPSSNDGILATPSP) are disordered. A compositionally biased stretch (low complexity) spans 1794-1803 (SQSSDAASSS). Residues 2015 to 2197 (FQLMADFLSR…DAGYKHVEWT (183 aa)) are methyltransferase domain. An NADPH-binding (R) domain region spans residues 2281–2526 (VTGTTGSLGS…TLRSFPAVEG (246 aa)).

Requires pantetheine 4'-phosphate as cofactor.

Its pathway is secondary metabolite biosynthesis. Non-reducing polyketide synthase; part of the gene cluster that mediates the biosynthesis of sorbicillinoids, a diverse group of yellow secondary metabolites that restrict growth of competing pathogenic fungi but not of bacteria. Sorbicillinoids biosynthesis requires the action of two PKSs. SorA iteratively combines three acetyl units and the growing chain is modified by the ketoacyl reductase subunit, and optional by the enoyl reductase subunit in the second cycle. The polyketide is then handed over to the PKS SorB, which adds three more acetyl units, and two methyl groups. SorB releases an aldehyde, which undergoes spontaneous cyclization resulting in the formation of sorbicillin or 2',3'-dihydrosorbicillin. The monooxygenase sorC oxidizes sorbicillin and 2',3'-dihydrosorbicillin to 2',3'-dihydrosorbicillinol and sorbicillinol, respectively. The oxidoreductase sorD further converts sorbicillinol into oxosorbicillinol. Sorbicillinol is the building block for the other sorbicillinoids such as disorbicillinol, bisvertinolon, and dihydrobisvertinolone. This is Non-reducing polyketide synthase sorB from Penicillium rubens (strain ATCC 28089 / DSM 1075 / NRRL 1951 / Wisconsin 54-1255) (Penicillium chrysogenum).